The chain runs to 365 residues: Aminomethyltransferase (365 aa).

This sequence belongs to the GcvT family. As to quaternary structure, the glycine cleavage system is composed of four proteins: P, T, L and H.

The catalysed reaction is N(6)-[(R)-S(8)-aminomethyldihydrolipoyl]-L-lysyl-[protein] + (6S)-5,6,7,8-tetrahydrofolate = N(6)-[(R)-dihydrolipoyl]-L-lysyl-[protein] + (6R)-5,10-methylene-5,6,7,8-tetrahydrofolate + NH4(+). In terms of biological role, the glycine cleavage system catalyzes the degradation of glycine. The protein is Aminomethyltransferase of Yersinia pestis bv. Antiqua (strain Antiqua).